The primary structure comprises 354 residues: Protein REDOX 1 (354 aa).

Residue cysteine 44 coordinates Zn(2+). Residue 45 to 49 coordinates NAD(+); it reads HSDLH. Zn(2+) contacts are provided by histidine 66, cysteine 97, cysteine 100, cysteine 103, and cysteine 111. NAD(+)-binding positions include 185 to 190, lysine 214, 271 to 273, 295 to 297, and arginine 340; these read GLGGLG, VGA, and SAV.

It belongs to the zinc-containing alcohol dehydrogenase family. Zn(2+) is required as a cofactor. In terms of tissue distribution, expressed in leaf epidermis.

It catalyses the reaction 3,17-didehydrostemmadenine + NADPH + H2O = (16S)-deshydroxymethyl-stemmadenine + formate + NADP(+). It carries out the reaction 3,17-didehydrostemmadenine + NADPH + H2O = (16R)-deshydroxymethyl-stemmadenine + formate + NADP(+). The enzyme catalyses 17-dehydrostemmadenine + NADP(+) = 3,17-didehydrostemmadenine + NADPH. It participates in alkaloid biosynthesis. Functionally, component of iboga and aspidosperma monoterpenoid indole alkaloids (MIAs, e.g. tabersonine and catharanthine) biosynthesis pathway from 19E-geissoschizine. Catalyzes the first oxidation step of the unstable intermediate product resulting from the reaction triggered by the geissoschizine oxidase (GO) in the stemmadenine biosynthesis process from 19E-geissoschizine. In Catharanthus roseus (Madagascar periwinkle), this protein is Protein REDOX 1.